Reading from the N-terminus, the 181-residue chain is Large ribosomal subunit protein uL5 (181 aa).

The protein belongs to the universal ribosomal protein uL5 family. As to quaternary structure, part of the 50S ribosomal subunit; part of the 5S rRNA/L5/L18/L25 subcomplex. Contacts the 5S rRNA and the P site tRNA. Forms a bridge to the 30S subunit in the 70S ribosome.

Functionally, this is one of the proteins that bind and probably mediate the attachment of the 5S RNA into the large ribosomal subunit, where it forms part of the central protuberance. In the 70S ribosome it contacts protein S13 of the 30S subunit (bridge B1b), connecting the 2 subunits; this bridge is implicated in subunit movement. Contacts the P site tRNA; the 5S rRNA and some of its associated proteins might help stabilize positioning of ribosome-bound tRNAs. The sequence is that of Large ribosomal subunit protein uL5 from Baumannia cicadellinicola subsp. Homalodisca coagulata.